Consider the following 90-residue polypeptide: Protein LIM3 (90 aa).

An N-terminal signal peptide occupies residues 1–26 (MAAVKFLVCSVLLVVLATQSEIGLAQ). Disulfide bonds link Cys28-Cys65, Cys38-Cys54, Cys55-Cys80, and Cys67-Cys87.

This sequence belongs to the A9/FIL1 family.

Its subcellular location is the secreted. The protein is Protein LIM3 (LIM3) of Lilium longiflorum (Trumpet lily).